A 32-amino-acid chain; its full sequence is Calcitonin-2 (32 aa).

Cys-1 and Cys-7 are oxidised to a cystine. Residue Pro-32 is modified to Proline amide.

Belongs to the calcitonin family.

Its subcellular location is the secreted. In terms of biological role, causes a rapid but short-lived drop in the level of calcium and phosphate in blood by promoting the incorporation of those ions in the bones. The protein is Calcitonin-2 of Oncorhynchus gorbuscha (Pink salmon).